A 203-amino-acid polypeptide reads, in one-letter code: Urease accessory protein UreG (203 aa).

14 to 21 (GPVGSGKT) contributes to the GTP binding site.

Belongs to the SIMIBI class G3E GTPase family. UreG subfamily. As to quaternary structure, homodimer. UreD, UreF and UreG form a complex that acts as a GTP-hydrolysis-dependent molecular chaperone, activating the urease apoprotein by helping to assemble the nickel containing metallocenter of UreC. The UreE protein probably delivers the nickel.

Its subcellular location is the cytoplasm. Facilitates the functional incorporation of the urease nickel metallocenter. This process requires GTP hydrolysis, probably effectuated by UreG. This is Urease accessory protein UreG from Agrobacterium fabrum (strain C58 / ATCC 33970) (Agrobacterium tumefaciens (strain C58)).